Reading from the N-terminus, the 146-residue chain is Bradykinin-like neuropeptide (146 aa).

The first 24 residues, 1 to 24 (MTSSIYGFITLSVVALISQTTCRS), serve as a signal peptide directing secretion. 2 consecutive propeptides follow at residues 25–80 (LDLL…LMEA) and 92–146 (LRSY…FRYG).

As to expression, neuron L5.

It localises to the secreted. Its function is as follows. May have important functions in renal physiology and in animal behavior, as does bradykinin. This Aplysia californica (California sea hare) protein is Bradykinin-like neuropeptide (LUQ-1).